We begin with the raw amino-acid sequence, 64 residues long: Cytochrome c oxidase subunit 2 (64 aa).

Topologically, residues Met1–Ser14 are mitochondrial intermembrane. The helical transmembrane segment at Pro15–Met45 threads the bilayer. Residues Leu46–Ile64 are Mitochondrial matrix-facing.

Belongs to the cytochrome c oxidase subunit 2 family. Component of the cytochrome c oxidase (complex IV, CIV), a multisubunit enzyme composed of 14 subunits. The complex is composed of a catalytic core of 3 subunits MT-CO1, MT-CO2 and MT-CO3, encoded in the mitochondrial DNA, and 11 supernumerary subunits COX4I, COX5A, COX5B, COX6A, COX6B, COX6C, COX7A, COX7B, COX7C, COX8 and NDUFA4, which are encoded in the nuclear genome. The complex exists as a monomer or a dimer and forms supercomplexes (SCs) in the inner mitochondrial membrane with NADH-ubiquinone oxidoreductase (complex I, CI) and ubiquinol-cytochrome c oxidoreductase (cytochrome b-c1 complex, complex III, CIII), resulting in different assemblies (supercomplex SCI(1)III(2)IV(1) and megacomplex MCI(2)III(2)IV(2)). Found in a complex with TMEM177, COA6, COX18, COX20, SCO1 and SCO2. Interacts with TMEM177 in a COX20-dependent manner. Interacts with COX20. Interacts with COX16. It depends on Cu cation as a cofactor.

The protein resides in the mitochondrion inner membrane. The enzyme catalyses 4 Fe(II)-[cytochrome c] + O2 + 8 H(+)(in) = 4 Fe(III)-[cytochrome c] + 2 H2O + 4 H(+)(out). In terms of biological role, component of the cytochrome c oxidase, the last enzyme in the mitochondrial electron transport chain which drives oxidative phosphorylation. The respiratory chain contains 3 multisubunit complexes succinate dehydrogenase (complex II, CII), ubiquinol-cytochrome c oxidoreductase (cytochrome b-c1 complex, complex III, CIII) and cytochrome c oxidase (complex IV, CIV), that cooperate to transfer electrons derived from NADH and succinate to molecular oxygen, creating an electrochemical gradient over the inner membrane that drives transmembrane transport and the ATP synthase. Cytochrome c oxidase is the component of the respiratory chain that catalyzes the reduction of oxygen to water. Electrons originating from reduced cytochrome c in the intermembrane space (IMS) are transferred via the dinuclear copper A center (CU(A)) of subunit 2 and heme A of subunit 1 to the active site in subunit 1, a binuclear center (BNC) formed by heme A3 and copper B (CU(B)). The BNC reduces molecular oxygen to 2 water molecules using 4 electrons from cytochrome c in the IMS and 4 protons from the mitochondrial matrix. The chain is Cytochrome c oxidase subunit 2 (mt-co2) from Geophagus steindachneri (Red hump earth eater).